Consider the following 67-residue polypeptide: Large ribosomal subunit protein bL35 (67 aa).

It belongs to the bacterial ribosomal protein bL35 family.

The chain is Large ribosomal subunit protein bL35 from Novosphingobium aromaticivorans (strain ATCC 700278 / DSM 12444 / CCUG 56034 / CIP 105152 / NBRC 16084 / F199).